Here is a 108-residue protein sequence, read N- to C-terminus: ATP-dependent Clp protease adapter protein ClpS (108 aa).

The protein belongs to the ClpS family. In terms of assembly, binds to the N-terminal domain of the chaperone ClpA.

Involved in the modulation of the specificity of the ClpAP-mediated ATP-dependent protein degradation. This chain is ATP-dependent Clp protease adapter protein ClpS, found in Cupriavidus necator (strain ATCC 17699 / DSM 428 / KCTC 22496 / NCIMB 10442 / H16 / Stanier 337) (Ralstonia eutropha).